Reading from the N-terminus, the 289-residue chain is Somatostatin-like receptor F_48D10.1 (289 aa).

The Extracellular portion of the chain corresponds to Met-1 to Ala-57. A glycan (N-linked (GlcNAc...) asparagine) is linked at Asn-40. Residues Val-58–Leu-79 form a helical membrane-spanning segment. Residues Arg-80–Asn-89 lie on the Cytoplasmic side of the membrane. A helical transmembrane segment spans residues Ile-90–Ala-110. At Thr-111–Arg-126 the chain is on the extracellular side. Cys-125 and Cys-221 are joined by a disulfide. A helical transmembrane segment spans residues Val-127–Ile-148. Over Asp-149–Lys-170 the chain is Cytoplasmic. Residues Val-171–Ser-191 traverse the membrane as a helical segment. Residues Asp-192–Thr-240 lie on the Extracellular side of the membrane. A helical membrane pass occupies residues Ala-241–Ile-261. Over Lys-262–Arg-289 the chain is Cytoplasmic.

The protein belongs to the G-protein coupled receptor 1 family.

Its subcellular location is the cell membrane. The protein is Somatostatin-like receptor F_48D10.1 of Takifugu rubripes (Japanese pufferfish).